Reading from the N-terminus, the 286-residue chain is Divergent deoxyribose-phosphate aldolase-like protein (286 aa).

Homodimer. Interacts with ADF; the interaction enhances ADF activity in disassembly of filamentous actin and inhibition of actin polymerization.

The protein resides in the cytoplasm. Functionally, involved in regulation of actin dynamics. The protein is Divergent deoxyribose-phosphate aldolase-like protein of Toxoplasma gondii.